The primary structure comprises 550 residues: Crystal protein (550 aa).

Residues 1-19 form the signal peptide; the sequence is MNKIIILLIILLSFDIISA. Residues cysteine 91 and cysteine 111 are joined by a disulfide bond. N-linked (GlcNAc...) asparagine glycosylation occurs at asparagine 156. The Acyl-ester intermediate role is filled by serine 215. A disulfide bond links cysteine 267 and cysteine 274. Active-site charge relay system residues include glutamate 340 and histidine 443. Asparagine 506 is a glycosylation site (N-linked (GlcNAc...) asparagine).

The protein belongs to the type-B carboxylesterase/lipase family.

It localises to the cytoplasmic vesicle. Its subcellular location is the esterosome membrane. The polypeptide is Crystal protein (cryS) (Dictyostelium discoideum (Social amoeba)).